Reading from the N-terminus, the 137-residue chain is Small ribosomal subunit protein uS9 (137 aa).

A disordered region spans residues leucine 105–arginine 137. Positions glycine 109–lysine 122 are enriched in basic and acidic residues. Positions tyrosine 123–arginine 137 are enriched in basic residues.

Belongs to the universal ribosomal protein uS9 family.

The protein is Small ribosomal subunit protein uS9 of Synechococcus sp. (strain JA-3-3Ab) (Cyanobacteria bacterium Yellowstone A-Prime).